We begin with the raw amino-acid sequence, 612 residues long: Dihydroxy-acid dehydratase (612 aa).

Residue Asp-81 participates in Mg(2+) binding. A [2Fe-2S] cluster-binding site is contributed by Cys-122. Mg(2+) contacts are provided by Asp-123 and Lys-124. Position 124 is an N6-carboxylysine (Lys-124). Cys-195 contacts [2Fe-2S] cluster. Glu-491 is a Mg(2+) binding site. Ser-517 serves as the catalytic Proton acceptor.

Belongs to the IlvD/Edd family. In terms of assembly, homodimer. The cofactor is [2Fe-2S] cluster. It depends on Mg(2+) as a cofactor.

The catalysed reaction is (2R)-2,3-dihydroxy-3-methylbutanoate = 3-methyl-2-oxobutanoate + H2O. It carries out the reaction (2R,3R)-2,3-dihydroxy-3-methylpentanoate = (S)-3-methyl-2-oxopentanoate + H2O. It participates in amino-acid biosynthesis; L-isoleucine biosynthesis; L-isoleucine from 2-oxobutanoate: step 3/4. Its pathway is amino-acid biosynthesis; L-valine biosynthesis; L-valine from pyruvate: step 3/4. Its function is as follows. Functions in the biosynthesis of branched-chain amino acids. Catalyzes the dehydration of (2R,3R)-2,3-dihydroxy-3-methylpentanoate (2,3-dihydroxy-3-methylvalerate) into 2-oxo-3-methylpentanoate (2-oxo-3-methylvalerate) and of (2R)-2,3-dihydroxy-3-methylbutanoate (2,3-dihydroxyisovalerate) into 2-oxo-3-methylbutanoate (2-oxoisovalerate), the penultimate precursor to L-isoleucine and L-valine, respectively. The chain is Dihydroxy-acid dehydratase from Buchnera aphidicola subsp. Baizongia pistaciae (strain Bp).